Here is a 350-residue protein sequence, read N- to C-terminus: Serpentine receptor class beta-12 (350 aa).

Over Met-1 to Tyr-21 the chain is Extracellular. Asn-5 carries an N-linked (GlcNAc...) asparagine glycan. Residues Met-22–Phe-42 form a helical membrane-spanning segment. Residues Met-43–Lys-57 are Cytoplasmic-facing. A helical transmembrane segment spans residues Phe-58–Phe-78. Topologically, residues Gly-79–Tyr-103 are extracellular. Asn-97 carries N-linked (GlcNAc...) asparagine glycosylation. The helical transmembrane segment at Gly-104–Val-124 threads the bilayer. Residues Glu-125–Thr-141 lie on the Cytoplasmic side of the membrane. The helical transmembrane segment at Leu-142–Ile-162 threads the bilayer. Topologically, residues Tyr-163–Phe-189 are extracellular. The helical transmembrane segment at Leu-190–Ile-210 threads the bilayer. Over His-211 to Thr-243 the chain is Cytoplasmic. Residues Leu-244–Ile-264 traverse the membrane as a helical segment. Residues Arg-265–Arg-282 are Extracellular-facing. The N-linked (GlcNAc...) asparagine glycan is linked to Asn-277. The helical transmembrane segment at Gly-283–Leu-303 threads the bilayer. Residues Asn-304–Leu-350 are Cytoplasmic-facing.

Belongs to the nematode receptor-like protein srb family. Expressed throughout the head.

It localises to the cell membrane. The protein resides in the perikaryon. It is found in the cell projection. The protein localises to the dendrite. G-protein coupled receptor. Plays a role in the navigational capacity of sperm and promotes the targeting of sperm derived from males to the fertilization site in the uterus of hermaphrodites. The chain is Serpentine receptor class beta-12 from Caenorhabditis elegans.